A 621-amino-acid chain; its full sequence is Chaperone protein HtpG (621 aa).

The segment at 1-341 (MSNQEYTFQT…SEDLPLNVSR (341 aa)) is a; substrate-binding. Residues 342 to 547 (EILQQNKILA…GDEPNAMMAN (206 aa)) form a b region. A c region spans residues 548 to 621 (WMRQMGQSVP…RLNSVLLKAL (74 aa)).

It belongs to the heat shock protein 90 family. Homodimer.

The protein localises to the cytoplasm. Molecular chaperone. Has ATPase activity. The sequence is that of Chaperone protein HtpG from Helicobacter pylori (strain J99 / ATCC 700824) (Campylobacter pylori J99).